The sequence spans 484 residues: MIHGQTSTPGLSVAPQIMRASWVESRKGQANVSQMHYARQGVVTEEMAHVAKRENLPESLVMEEVARGRMIIPANINHTNLEPMAIGIASKCKVNANIGASPNASDAAEEVKKLKLAVKYGADTVMDLSTGGVNLDEVRTAIIGASPVPIGTVPVYQALESVHGSIEKLDEDDFLHIIEKHCQQGVDYQTIHAGLLIEHLPKVKGRITGIVSRGGGILAQWMLYHHRQNPLYTRFDDICEIFKRYDCTFSLGDSLRPGCQHDASDAAQLAELHTLGELTRRAWKHDVQVMVEGPGHVPLDQIEFNVKKQMEECSEAPFYVLGPLVTDIAPGYDHITSAIGAAMAGWHGTAMLCYVTPKEHLGLPNADDVREGLIAYKIAAHAADIARHRPGARDRDDELSRARYNFDWNKQFELSLDPERAKEYHDETLPADIYKQAEFCSMCGPKHCPMQTKITDEDLEGLEKVLEANTGAAELTPVKLDKAD.

Substrate contacts are provided by residues Asn97, Met126, Tyr156, His192, 212–214, 253–256, and Glu292; these read SRG and DSLR. His296 contributes to the Zn(2+) binding site. Substrate is bound at residue Tyr319. His360 serves as a coordination point for Zn(2+). 3 residues coordinate [4Fe-4S] cluster: Cys440, Cys443, and Cys448.

Belongs to the ThiC family. Requires [4Fe-4S] cluster as cofactor.

It catalyses the reaction 5-amino-1-(5-phospho-beta-D-ribosyl)imidazole + S-adenosyl-L-methionine = 4-amino-2-methyl-5-(phosphooxymethyl)pyrimidine + CO + 5'-deoxyadenosine + formate + L-methionine + 3 H(+). Its pathway is cofactor biosynthesis; thiamine diphosphate biosynthesis. Its function is as follows. Catalyzes the synthesis of the hydroxymethylpyrimidine phosphate (HMP-P) moiety of thiamine from aminoimidazole ribotide (AIR) in a radical S-adenosyl-L-methionine (SAM)-dependent reaction. The polypeptide is Phosphomethylpyrimidine synthase (Synechococcus sp. (strain CC9605)).